The following is a 469-amino-acid chain: MTAQTLYDKLWNSHVVREEGDGTVLLYIDRHLVHEVTSPQAFEGLKMAGRKLWRIDSVVSTADHNTPTGDWDKGIQDPISKLQVDTLDQNIKEFGALAYFPFMDKGQGIVHVMGPEQGATLPGMTVVCGDSHTSTHGAFGALAHGIGTSEVEHTMATQCITAKKSKSMLIAADGKLKAGVTAKDVALYIIGQIGTAGGTGYAVEFGGEAIRSLSMEGRMTLCNMAIEAGARSGMVAVDQTTIDYVKGKPFAPEGEAWDKAVEYWRTLVSDEGAVFDKEYRFNAEDIEPQVTWGTSPEMVLNIGGKVPNPAEETDPVKRSGIERALEYMGLKAGTPLNEIPVDIVFIGSCTNSRIEDLREAAAIAKGHKKAGNVQRVLIVPGSGLVKEQAEKEGLDKIFIEAGFEWREPGCSMCLAMNADRLAPRQRCASTSNRNFEGRQGNGGRTHLVSPAMAAAAAVTGHFTDIRTMA.

The [4Fe-4S] cluster site is built by Cys349, Cys410, and Cys413.

Belongs to the aconitase/IPM isomerase family. LeuC type 1 subfamily. In terms of assembly, heterodimer of LeuC and LeuD. The cofactor is [4Fe-4S] cluster.

It catalyses the reaction (2R,3S)-3-isopropylmalate = (2S)-2-isopropylmalate. It participates in amino-acid biosynthesis; L-leucine biosynthesis; L-leucine from 3-methyl-2-oxobutanoate: step 2/4. Its function is as follows. Catalyzes the isomerization between 2-isopropylmalate and 3-isopropylmalate, via the formation of 2-isopropylmaleate. The protein is 3-isopropylmalate dehydratase large subunit of Neisseria gonorrhoeae (strain ATCC 700825 / FA 1090).